The following is a 45-amino-acid chain: DNA-directed RNA polymerase subunit Rpo12 (45 aa).

Residues Cys-8, Cys-23, and Cys-26 each contribute to the Zn(2+) site.

It belongs to the archaeal Rpo12/eukaryotic RPC10 RNA polymerase subunit family. Part of the RNA polymerase complex. Zn(2+) serves as cofactor.

It is found in the cytoplasm. The enzyme catalyses RNA(n) + a ribonucleoside 5'-triphosphate = RNA(n+1) + diphosphate. Functionally, DNA-dependent RNA polymerase (RNAP) catalyzes the transcription of DNA into RNA using the four ribonucleoside triphosphates as substrates. The polypeptide is DNA-directed RNA polymerase subunit Rpo12 (Methanothrix thermoacetophila (strain DSM 6194 / JCM 14653 / NBRC 101360 / PT) (Methanosaeta thermophila)).